Reading from the N-terminus, the 122-residue chain is Large ribosomal subunit protein uL14 (122 aa).

Belongs to the universal ribosomal protein uL14 family. In terms of assembly, part of the 50S ribosomal subunit. Forms a cluster with proteins L3 and L19. In the 70S ribosome, L14 and L19 interact and together make contacts with the 16S rRNA in bridges B5 and B8.

In terms of biological role, binds to 23S rRNA. Forms part of two intersubunit bridges in the 70S ribosome. This Rhodopseudomonas palustris (strain HaA2) protein is Large ribosomal subunit protein uL14.